Reading from the N-terminus, the 872-residue chain is HTH-type transcriptional regulator AlkS (872 aa).

The 66-residue stretch at 805-870 folds into the HTH luxR-type domain; that stretch reads LTNTQSTITI…RAVSEARLRG (66 aa). A DNA-binding region (H-T-H motif) is located at residues 829 to 848; the sequence is NKEIAERLLITEDTVKWHLK.

It participates in hydrocarbon metabolism; alkane degradation. In terms of biological role, this protein activates the expression of AlkB1 in the presence of alkanes. The chain is HTH-type transcriptional regulator AlkS (alkS) from Alcanivorax borkumensis (strain ATCC 700651 / DSM 11573 / NCIMB 13689 / SK2).